Reading from the N-terminus, the 609-residue chain is Alpha-glucosides permease MPH2 (609 aa).

Residues 1–106 are Cytoplasmic-facing; it reads MKNLSFLINR…AAAWSLLVST (106 aa). The helical transmembrane segment at 107-127 threads the bilayer; that stretch reads TLIMEGYDTAILGAFYALPIF. The Extracellular segment spans residues 128-142; that stretch reads QRKFGSQNDKTGEWE. The helical transmembrane segment at 143–163 threads the bilayer; it reads ISASWQIGLTLCYMAGEIVGL. Topologically, residues 164 to 178 are cytoplasmic; the sequence is QLTGPSVDLVGNRYT. A helical membrane pass occupies residues 179-199; sequence LIIALFFLAAFTFILYFCNSL. A topological domain (extracellular) is located at residue G200. Residues 201–221 form a helical membrane-spanning segment; sequence MIAVGQALCGMPWGCFQCLTV. Over 222–234 the chain is Cytoplasmic; sequence SYASEICPLALRY. A helical membrane pass occupies residues 235-255; the sequence is YLTTYSNLCWLFGQLFAAGIM. Residues 256-270 are Extracellular-facing; sequence KNSQKKYADSELGYK. Residues 271 to 291 traverse the membrane as a helical segment; that stretch reads LPFALQWILPVPLALGIFFAP. At 292 to 363 the chain is on the cytoplasmic side; the sequence is ESPWWLVKKG…EDKINRRRTR (72 aa). The chain crosses the membrane as a helical span at residues 364–384; that stretch reads ITCLCWAGQATCGSILIGYST. The Extracellular portion of the chain corresponds to 385–397; it reads YFYEKAGVSTEMS. Residues 398-418 traverse the membrane as a helical segment; the sequence is FTFSIIQYCLGICATFLSWWA. Over 419 to 426 the chain is Cytoplasmic; it reads SKYFGRYD. Residues 427 to 447 form a helical membrane-spanning segment; that stretch reads LYAFGLAFQTIVFFIIGGLGC. The Extracellular portion of the chain corresponds to 448–459; that stretch reads SSTHGSKMGSGS. A helical transmembrane segment spans residues 460-480; it reads LLMAVAFFYNLGIAPVVFCLV. At 481 to 492 the chain is on the cytoplasmic side; that stretch reads SEMPSSRLRTKT. A helical membrane pass occupies residues 493–513; that stretch reads IILARNTYNVVSIICSVLILY. Residues 514–525 are Extracellular-facing; it reads QLNSKKWNWGAK. Residues 526–546 traverse the membrane as a helical segment; sequence SGFFWGVLCFCTLIWAVVDLP. Residues 547-609 are Cytoplasmic-facing; it reads ETAGKTFVEI…QRNSNVSHHL (63 aa).

Belongs to the major facilitator superfamily. Sugar transporter (TC 2.A.1.1) family.

The protein localises to the cell membrane. High-affinity uptake of maltose and maltotriose. Also transports alpha-methylglucoside, glucose and turanose but not melezitose or trehalose. This is Alpha-glucosides permease MPH2 (MPH2) from Saccharomyces cerevisiae (strain ATCC 204508 / S288c) (Baker's yeast).